We begin with the raw amino-acid sequence, 224 residues long: Holliday junction branch migration complex subunit RuvA (224 aa).

Positions Met1–Pro64 are domain I. Residues Thr65–Ala143 are domain II. The disordered stretch occupies residues Gly141–Asn185. The tract at residues Ala144–Pro170 is flexible linker. A domain III region spans residues Pro171–Ser224.

This sequence belongs to the RuvA family. In terms of assembly, homotetramer. Forms an RuvA(8)-RuvB(12)-Holliday junction (HJ) complex. HJ DNA is sandwiched between 2 RuvA tetramers; dsDNA enters through RuvA and exits via RuvB. An RuvB hexamer assembles on each DNA strand where it exits the tetramer. Each RuvB hexamer is contacted by two RuvA subunits (via domain III) on 2 adjacent RuvB subunits; this complex drives branch migration. In the full resolvosome a probable DNA-RuvA(4)-RuvB(12)-RuvC(2) complex forms which resolves the HJ.

The protein localises to the cytoplasm. Functionally, the RuvA-RuvB-RuvC complex processes Holliday junction (HJ) DNA during genetic recombination and DNA repair, while the RuvA-RuvB complex plays an important role in the rescue of blocked DNA replication forks via replication fork reversal (RFR). RuvA specifically binds to HJ cruciform DNA, conferring on it an open structure. The RuvB hexamer acts as an ATP-dependent pump, pulling dsDNA into and through the RuvAB complex. HJ branch migration allows RuvC to scan DNA until it finds its consensus sequence, where it cleaves and resolves the cruciform DNA. The chain is Holliday junction branch migration complex subunit RuvA from Cereibacter sphaeroides (strain KD131 / KCTC 12085) (Rhodobacter sphaeroides).